Consider the following 374-residue polypeptide: Tryptophan--tRNA ligase (374 aa).

The short motif at 71–79 (PSGRMHLGH) is the 'HIGH' region element. Positions 247-251 (KMSSS) match the 'KMSKS' region motif.

This sequence belongs to the class-I aminoacyl-tRNA synthetase family.

The protein localises to the cytoplasm. It catalyses the reaction tRNA(Trp) + L-tryptophan + ATP = L-tryptophyl-tRNA(Trp) + AMP + diphosphate + H(+). The chain is Tryptophan--tRNA ligase from Methanopyrus kandleri (strain AV19 / DSM 6324 / JCM 9639 / NBRC 100938).